The following is a 294-amino-acid chain: N-acetylmuramic acid 6-phosphate etherase (294 aa).

Residues 54 to 217 (VIQSFEEEGR…STASMIGVGK (164 aa)) enclose the SIS domain. Residue Glu-82 is the Proton donor of the active site. The active site involves Glu-113.

Belongs to the GCKR-like family. MurNAc-6-P etherase subfamily. As to quaternary structure, homodimer.

It catalyses the reaction N-acetyl-D-muramate 6-phosphate + H2O = N-acetyl-D-glucosamine 6-phosphate + (R)-lactate. The protein operates within amino-sugar metabolism; N-acetylmuramate degradation. Functionally, specifically catalyzes the cleavage of the D-lactyl ether substituent of MurNAc 6-phosphate, producing GlcNAc 6-phosphate and D-lactate. The polypeptide is N-acetylmuramic acid 6-phosphate etherase (Bacillus anthracis (strain A0248)).